The following is a 176-amino-acid chain: Large ribosomal subunit protein uL30 (176 aa).

It belongs to the universal ribosomal protein uL30 family. Part of the 50S ribosomal subunit.

This chain is Large ribosomal subunit protein uL30, found in Pyrobaculum arsenaticum (strain DSM 13514 / JCM 11321 / PZ6).